The chain runs to 103 residues: Trp operon repressor homolog (103 aa).

Residues 62 to 85 (QRKISELLGVGVATITRGSNELKH) mediate DNA binding.

It belongs to the TrpR family. In terms of assembly, homodimer.

The protein localises to the cytoplasm. Functionally, this protein is an aporepressor. When complexed with L-tryptophan it binds the operator region of the trp operon and prevents the initiation of transcription. The sequence is that of Trp operon repressor homolog from Photobacterium profundum (strain SS9).